An 883-amino-acid polypeptide reads, in one-letter code: MNEQYSALRSNVSMLGKVLGETIKDALGEHILERVETIRKLSKSSRAGNDANRQELLTTLQNLSNDELLPVARAFSQFLNLANTAEQYHSISPKGEAASNPEVIARTLRKLKNQPELSEDTIKKAVESLSLELVLTAHPTEITRRTLIHKMVEVNACLKQLDNKDIADYEHNQLMRRLRQLIAQSWHTDEIRKLRPSPVDEAKWGFAVVENSLWQGVPNYLRELNEQLEENLGYKLPVEFVPVRFTSWMGGDRDGNPNVTADITRHVLLLSRWKATDLFLKDIQVLVSELSMVEATPELLALVGEEGAAEPYRYLMKNLRSRLMATQAWLEARLKGEELPKPEGLLTQNEELWEPLYACYQSLQACGMGIIANGDLLDTLRRVKCFGVPLVRIDIRQESTRHTEALGELTRYLGIGDYESWSEADKQAFLIRELNSKRPLLPRNWQPSAETREVLDTCQVIAEAPQGSIAAYVISMAKTPSDVLAVHLLLKEAGIGFAMPVAPLFETLDDLNNANDVMTQLLNIDWYRGLIQGKQMVMIGYSDSAKDAGVMAASWAQYQAQDALIKTCEKAGIELTLFHGRGGSIGRGGAPAHAALLSQPPGSLKGGLRVTEQGEMIRFKYGLPEITVSSLSLYTGAILEANLLPPPEPKESWRRIMDELSVISCDLYRGYVRENKDFVPYFRSATPEQELGKLPLGSRPAKRRPTGGVESLRAIPWIFAWTQNRLMLPAWLGAGTALQKVVEDGKQSELEAMCRDWPFFSTRLGMLEMVFAKADLWLAEYYDQRLVDKALWPLGKELRNLQEEDIKVVLAIANDSHLMADLPWIAESIQLRNIYTDPLNVLQAELLHRSRQAEKEGHEPDPRVEQALMVTIAGIAAGMRNTG.

Catalysis depends on residues histidine 138 and lysine 546.

This sequence belongs to the PEPCase type 1 family. Mg(2+) is required as a cofactor.

It catalyses the reaction oxaloacetate + phosphate = phosphoenolpyruvate + hydrogencarbonate. Forms oxaloacetate, a four-carbon dicarboxylic acid source for the tricarboxylic acid cycle. This is Phosphoenolpyruvate carboxylase from Escherichia coli O7:K1 (strain IAI39 / ExPEC).